A 295-amino-acid polypeptide reads, in one-letter code: Glutamyl-Q tRNA(Asp) synthetase (295 aa).

L-glutamate is bound by residues 5-9 and Glu-41; that span reads RFAPS. The 'HIGH' region signature appears at 8 to 18; sequence PSPTGLLHIGS. 4 residues coordinate Zn(2+): Cys-97, Cys-99, Tyr-117, and Cys-121. The L-glutamate site is built by Tyr-178 and Arg-196. The 'KMSKS' region signature appears at 234–238; the sequence is KWSKQ. Lys-237 contributes to the ATP binding site.

It belongs to the class-I aminoacyl-tRNA synthetase family. GluQ subfamily. Requires Zn(2+) as cofactor.

Functionally, catalyzes the tRNA-independent activation of glutamate in presence of ATP and the subsequent transfer of glutamate onto a tRNA(Asp). Glutamate is transferred on the 2-amino-5-(4,5-dihydroxy-2-cyclopenten-1-yl) moiety of the queuosine in the wobble position of the QUC anticodon. The chain is Glutamyl-Q tRNA(Asp) synthetase from Neisseria meningitidis serogroup C / serotype 2a (strain ATCC 700532 / DSM 15464 / FAM18).